The primary structure comprises 637 residues: Chaperone protein DnaK (637 aa).

Threonine 196 is modified (phosphothreonine; by autocatalysis). Disordered stretches follow at residues 503-525 and 598-637; these read AEIN…RKEE and SGAG…DDKK. The segment covering 598–619 has biased composition (low complexity); that stretch reads SGAGAAQAQPEAPQNSGSSQSS.

It belongs to the heat shock protein 70 family.

In terms of biological role, acts as a chaperone. The sequence is that of Chaperone protein DnaK from Chlorobium chlorochromatii (strain CaD3).